The chain runs to 409 residues: Divalent metal cation transporter MntH (409 aa).

The next 11 helical transmembrane spans lie at 19-39 (LSLMGPAFIAAIAYIDPGNFA), 46-66 (ATFGYTLLWVVVWANVMAMLV), 98-118 (WVQAEIIVMATDLAEFIGAAI), 122-142 (LLFGVTLLQGAVLTGIATFLI), 155-175 (LVIGGLLLFVAAAYIVELIFS), 196-216 (AVFLAAGVLGATIMPHVIYLH), 241-261 (IAMTIAGFVNLAMMATAAAAF), 290-310 (VFGLSLIAAGLSSTVVGTLAG), 320-340 (FYIPMWVRRIVTMLPSFIVIL), 348-368 (ILVMSQVLLSFGIALALVPLL), and 388-408 (ILGKLVVLIVVGLNAYLLISL).

This sequence belongs to the NRAMP family.

Its subcellular location is the cell inner membrane. H(+)-stimulated, divalent metal cation uptake system. This Yersinia pseudotuberculosis serotype O:1b (strain IP 31758) protein is Divalent metal cation transporter MntH.